The following is a 185-amino-acid chain: Dual specificity protein phosphatase 3 (185 aa).

The Tyrosine-protein phosphatase domain occupies 28-179 (QPCNEVTPRI…LCQLNDRLAK (152 aa)). The Phosphocysteine intermediate role is filled by cysteine 124.

Belongs to the protein-tyrosine phosphatase family. Non-receptor class dual specificity subfamily. As to quaternary structure, microtubule inner protein component of sperm flagellar doublet microtubules. Interacts with VRK3; this interaction activates DUSP3 phosphatase activity.

The protein localises to the nucleus. It is found in the cytoplasm. The protein resides in the cytoskeleton. It localises to the flagellum axoneme. The enzyme catalyses O-phospho-L-tyrosyl-[protein] + H2O = L-tyrosyl-[protein] + phosphate. The catalysed reaction is O-phospho-L-seryl-[protein] + H2O = L-seryl-[protein] + phosphate. It catalyses the reaction O-phospho-L-threonyl-[protein] + H2O = L-threonyl-[protein] + phosphate. Its function is as follows. Shows activity both for tyrosine-protein phosphate and serine-protein phosphate, but displays a strong preference toward phosphotyrosines. Specifically dephosphorylates and inactivates ERK1 and ERK2. This chain is Dual specificity protein phosphatase 3 (DUSP3), found in Homo sapiens (Human).